We begin with the raw amino-acid sequence, 481 residues long: Ribosomal RNA small subunit methyltransferase F (481 aa).

S-adenosyl-L-methionine-binding positions include 119–125 (ASAPGSK), E143, D170, and D188. The active-site Nucleophile is the C241.

It belongs to the class I-like SAM-binding methyltransferase superfamily. RsmB/NOP family.

The protein resides in the cytoplasm. It catalyses the reaction cytidine(1407) in 16S rRNA + S-adenosyl-L-methionine = 5-methylcytidine(1407) in 16S rRNA + S-adenosyl-L-homocysteine + H(+). Functionally, specifically methylates the cytosine at position 1407 (m5C1407) of 16S rRNA. This Shewanella sp. (strain MR-4) protein is Ribosomal RNA small subunit methyltransferase F.